Consider the following 170-residue polypeptide: Translationally-controlled tumor protein homolog (170 aa).

Residues 1-170 enclose the TCTP domain; it reads MIIYKDLLSG…FKDGLEIEKC (170 aa).

The protein belongs to the TCTP family.

The protein localises to the cytoplasm. In terms of biological role, involved in calcium binding and microtubule stabilization. In Scophthalmus maximus (Turbot), this protein is Translationally-controlled tumor protein homolog (tpt1).